The primary structure comprises 318 residues: NADH-ubiquinone oxidoreductase chain 1 (318 aa).

8 helical membrane-spanning segments follow: residues 2–22 (FLMNILCLIIPILLAMAFLTL), 70–90 (MFILAPTLAFSLALSMWIPMP), 100–120 (LGVLFILALSSLAVYSILWSG), 136–156 (VAQTISYEVTLAIILLSIMML), 171–191 (HLWLIFPLWPLAMMWFISTLA), 231–251 (IIMMNALTTILFLGALHNPLF), 253–273 (ELFTVNFVTKTLLLTVTFLWV), and 294–314 (LPLTLALCMLHVSTPTMLAGI).

Belongs to the complex I subunit 1 family.

The protein localises to the mitochondrion inner membrane. It catalyses the reaction a ubiquinone + NADH + 5 H(+)(in) = a ubiquinol + NAD(+) + 4 H(+)(out). Functionally, core subunit of the mitochondrial membrane respiratory chain NADH dehydrogenase (Complex I) that is believed to belong to the minimal assembly required for catalysis. Complex I functions in the transfer of electrons from NADH to the respiratory chain. The immediate electron acceptor for the enzyme is believed to be ubiquinone. The protein is NADH-ubiquinone oxidoreductase chain 1 (MT-ND1) of Priodontes maximus (Giant armadillo).